The sequence spans 583 residues: Chloroplast sensor kinase, chloroplastic (583 aa).

The transit peptide at 1-50 (MSSIYLHGLSRRRRIGSVIVAIYMLDSCGAFLSASGSGRYPGFSYRGLSV) directs the protein to the chloroplast. The interval 97 to 277 (LFQELALSQL…SMDTERAALQ (181 aa)) is GAF. Cys115 is a [3Fe-4S] cluster binding site. His292 bears the Phosphohistidine; by autocatalysis mark. The tract at residues 412 to 442 (AASGSNGPSNSTTSFSGNGSDVSTYTEDDGA) is disordered. Low complexity predominate over residues 414–431 (SGSNGPSNSTTSFSGNGS). Residues 447–583 (SSLFSEMDLE…ALDWTLRKHW (137 aa)) enclose the Histidine kinase domain.

This sequence belongs to the chloroplast sensor kinase protein family. In terms of assembly, oligomerizes. It depends on [3Fe-4S] cluster as a cofactor. In terms of processing, autophosphorylates, possibly on His-292.

Its subcellular location is the plastid. The protein resides in the chloroplast stroma. It catalyses the reaction ATP + protein L-histidine = ADP + protein N-phospho-L-histidine.. Functionally, sensor kinase that senses the plastoquinone (PQ) redox state involved in stoichiometry adjustment of both photosystems (e.g. long-term adaptation via transcriptional regulation of reaction center genes of photosystems I and II) and state transitions (e.g. short-term adaptation involving reversible post-translational phosphorylation of light-harvesting complex II, LHC II), thus linking photosynthesis with gene expression in chloroplasts. Reduced PQ suppresses its autophosphorylation activity. This is Chloroplast sensor kinase, chloroplastic from Phaeodactylum tricornutum (strain CCAP 1055/1).